The chain runs to 559 residues: Proton-coupled zinc antiporter SLC30A9, mitochondrial (559 aa).

The disordered stretch occupies residues 58–96; the sequence is SSDQKEDGGSKGTSAASSPEKSMAGLDPSKPEQKSTFPP. Helical transmembrane passes span 230–250, 305–325, 333–353, 389–409, and 415–435; these read VVIV…LAWV, GVGI…IGLL, LLWA…TLLV, AAAV…SLTG, and SLGS…LIYT. The short motif at 453–457 is the LXXLL motif element; sequence LTELL.

The protein belongs to the cation diffusion facilitator (CDF) transporter (TC 2.A.4) family. SLC30A subfamily.

It is found in the mitochondrion membrane. Its subcellular location is the nucleus. It localises to the endoplasmic reticulum. It carries out the reaction Zn(2+)(in) + 2 H(+)(out) = Zn(2+)(out) + 2 H(+)(in). Mitochondrial proton-coupled zinc ion antiporter mediating the export of zinc from the mitochondria and involved in zinc homeostasis, zinc mobilization as well as mitochondrial morphology and health. In nucleus, may function as a secondary coactivator for nuclear receptors. The chain is Proton-coupled zinc antiporter SLC30A9, mitochondrial (slc30a9) from Xenopus laevis (African clawed frog).